The following is an 84-amino-acid chain: Large ribosomal subunit protein bL31B (84 aa).

The protein belongs to the bacterial ribosomal protein bL31 family. Type B subfamily. Part of the 50S ribosomal subunit.

The protein is Large ribosomal subunit protein bL31B of Rhodococcus erythropolis (strain PR4 / NBRC 100887).